We begin with the raw amino-acid sequence, 63 residues long: Large ribosomal subunit protein uL30 (63 aa).

It belongs to the universal ribosomal protein uL30 family. In terms of assembly, part of the 50S ribosomal subunit.

The protein is Large ribosomal subunit protein uL30 of Natranaerobius thermophilus (strain ATCC BAA-1301 / DSM 18059 / JW/NM-WN-LF).